A 1363-amino-acid polypeptide reads, in one-letter code: Kinesin-like protein kif7 (1363 aa).

A Kinesin motor domain is found at 15-347; that stretch reads AVQVAVRVRP…LNYAKRARNI (333 aa). ATP is bound at residue 94–101; that stretch reads GQTGSGKT. Coiled coils occupy residues 358–385 and 491–552; these read EPDR…SETR and EDWR…LLAQ. Residues 603-622 show a composition bias toward polar residues; the sequence is DSSSYSEQTQWDGTHGNTHC. Residues 603–642 are disordered; that stretch reads DSSSYSEQTQWDGTHGNTHCESSRKLNRDEDGHMQTTRDK. Residues 623–640 are compositionally biased toward basic and acidic residues; the sequence is ESSRKLNRDEDGHMQTTR. Coiled-coil stretches lie at residues 714-1068 and 1116-1225; these read LLQA…AAIE and DKVV…LREM. The segment at 1314-1346 is disordered; it reads IVQPGMNSTHWSGSTSLPVTRPRREPRRSSLNT. The span at 1318-1331 shows a compositional bias: polar residues; sequence GMNSTHWSGSTSLP.

This sequence belongs to the TRAFAC class myosin-kinesin ATPase superfamily. Kinesin family. KIF27 subfamily. In terms of assembly, binds microtubules. Interacts with gli1 and sufu.

Its subcellular location is the cytoplasm. The protein localises to the cytoskeleton. It localises to the cell projection. The protein resides in the cilium. Its function is as follows. Acts downstream of smo as an intracellular repressor of hedgehog signaling pathway, mainly through the suppression of gli1 activity. This negative regulatory effect is enhanced in conjunction with the suppressor of fused (sufu) protein. Positively regulates gli2a activity by promoting its dissociation from sufu. Involved in the regulation of microtubular dynamics. This chain is Kinesin-like protein kif7 (kif7), found in Danio rerio (Zebrafish).